The sequence spans 193 residues: Dirigent protein (193 aa).

An N-terminal signal peptide occupies residues 1–29; that stretch reads MGGEKAFSFIFLLFLCFFLANLSASSAHP. Residues Cys-40 and Cys-192 are joined by a disulfide bond. 2 N-linked (GlcNAc...) asparagine glycosylation sites follow: Asn-59 and Asn-129.

Belongs to the plant dirigent protein family. In terms of assembly, homodimer. As to expression, expressed in rhizomes, stems, and leaves.

It is found in the secreted. The protein localises to the extracellular space. Its subcellular location is the apoplast. It functions in the pathway aromatic compound metabolism; phenylpropanoid biosynthesis. Dirigent proteins impart stereoselectivity on the phenoxy radical-coupling reaction, yielding optically active lignans from two molecules of coniferyl alcohol in the biosynthesis of lignans, flavonolignans, and alkaloids and thus plays a central role in plant secondary metabolism. Also involved in the biosynthesis of etoposide, a chemotherapeutic compound of the topoisomerase inhibitor family. This is Dirigent protein from Sinopodophyllum hexandrum (Himalayan may apple).